The sequence spans 181 residues: Adenylate kinase (181 aa).

10–15 (GAGKGT) lines the ATP pocket. An NMP region spans residues 30 to 59 (STGDLFRKNIGDGTPLGLEAKRYLDAGDLV). AMP contacts are provided by residues threonine 31, arginine 36, 57–59 (DLV), 85–88 (GYPR), and glutamine 92. The tract at residues 126–132 (GRGRADD) is LID. Arginine 127 contacts ATP. Residues arginine 129 and arginine 140 each coordinate AMP. Glycine 166 is an ATP binding site.

This sequence belongs to the adenylate kinase family. Monomer.

It is found in the cytoplasm. The catalysed reaction is AMP + ATP = 2 ADP. It functions in the pathway purine metabolism; AMP biosynthesis via salvage pathway; AMP from ADP: step 1/1. Catalyzes the reversible transfer of the terminal phosphate group between ATP and AMP. Plays an important role in cellular energy homeostasis and in adenine nucleotide metabolism. The protein is Adenylate kinase of Mycolicibacterium smegmatis (strain ATCC 700084 / mc(2)155) (Mycobacterium smegmatis).